The following is an 89-amino-acid chain: Small ribosomal subunit protein uS15 (89 aa).

This sequence belongs to the universal ribosomal protein uS15 family. As to quaternary structure, part of the 30S ribosomal subunit. Forms a bridge to the 50S subunit in the 70S ribosome, contacting the 23S rRNA.

In terms of biological role, one of the primary rRNA binding proteins, it binds directly to 16S rRNA where it helps nucleate assembly of the platform of the 30S subunit by binding and bridging several RNA helices of the 16S rRNA. Its function is as follows. Forms an intersubunit bridge (bridge B4) with the 23S rRNA of the 50S subunit in the ribosome. This Phocaeicola vulgatus (strain ATCC 8482 / DSM 1447 / JCM 5826 / CCUG 4940 / NBRC 14291 / NCTC 11154) (Bacteroides vulgatus) protein is Small ribosomal subunit protein uS15.